A 623-amino-acid polypeptide reads, in one-letter code: ATP-dependent lipid A-core flippase (623 aa).

Helical transmembrane passes span Leu66 to Ile86, Val103 to Phe123, Leu190 to Ile210, Leu290 to Leu310, and Ala317 to Ile337. Positions Val67–Lys349 constitute an ABC transmembrane type-1 domain. The ABC transporter domain occupies Val382–Met618. Gly416 to Thr423 is an ATP binding site.

This sequence belongs to the ABC transporter superfamily. Lipid exporter (TC 3.A.1.106) family. As to quaternary structure, homodimer.

Its subcellular location is the cell inner membrane. The enzyme catalyses ATP + H2O + lipid A-core oligosaccharideSide 1 = ADP + phosphate + lipid A-core oligosaccharideSide 2.. Involved in lipopolysaccharide (LPS) biosynthesis. Translocates lipid A-core from the inner to the outer leaflet of the inner membrane. Transmembrane domains (TMD) form a pore in the inner membrane and the ATP-binding domain (NBD) is responsible for energy generation. In Bordetella bronchiseptica (strain ATCC BAA-588 / NCTC 13252 / RB50) (Alcaligenes bronchisepticus), this protein is ATP-dependent lipid A-core flippase.